The primary structure comprises 292 residues: AKT-interacting protein (292 aa).

The segment at 1–63 (MNPLWSMSAG…TSPAPAAQST (63 aa)) is disordered. Basic and acidic residues predominate over residues 14–23 (KRAEGEEKTL). Phosphoserine is present on Ser30. A UBC core domain is found at 74 to 222 (YLEYSLLAEF…VVDSVKVCTA (149 aa)).

This sequence belongs to the ubiquitin-conjugating enzyme family. FTS subfamily. As to quaternary structure, component of the FTS/Hook/FHIP complex (FHF complex), composed of AKTIP/FTS, FHIP1B, and one or more members of the Hook family of proteins HOOK1, HOOK2, and HOOK3. Interacts directly with HOOK1, HOOK2 and HOOK3. The FHF complex associates with the homotypic vesicular sorting complex (the HOPS complex). Also interacts with AKT1. May interact with FHIP1A. Ubiquitous. Highest expression in kidney, testis and brain and lowest in spleen and liver.

Its subcellular location is the cytoplasm. It is found in the cell membrane. Its function is as follows. Component of the FTS/Hook/FHIP complex (FHF complex). The FHF complex may function to promote vesicle trafficking and/or fusion via the homotypic vesicular protein sorting complex (the HOPS complex). Regulates apoptosis by enhancing phosphorylation and activation of AKT1. Increases release of TNFSF6 via the AKT1/GSK3B/NFATC1 signaling cascade. FHF complex promotes the distribution of AP-4 complex to the perinuclear area of the cell. This Mus musculus (Mouse) protein is AKT-interacting protein (Aktip).